The chain runs to 355 residues: Molybdenum import ATP-binding protein ModC (355 aa).

Residues 1–233 (MTLIVEAKQR…PSAAADRKEA (233 aa)) form the ABC transporter domain. 31-38 (GRSGSGKT) serves as a coordination point for ATP. The Mop domain occupies 291 to 355 (GLSALNILEG…AIIKTVALEG (65 aa)).

Belongs to the ABC transporter superfamily. Molybdate importer (TC 3.A.1.8) family. The complex is composed of two ATP-binding proteins (ModC), two transmembrane proteins (ModB) and a solute-binding protein (ModA).

It localises to the cell inner membrane. It catalyses the reaction molybdate(out) + ATP + H2O = molybdate(in) + ADP + phosphate + H(+). Functionally, part of the ABC transporter complex ModABC involved in molybdenum import. Responsible for energy coupling to the transport system. This is Molybdenum import ATP-binding protein ModC from Rhizobium etli (strain ATCC 51251 / DSM 11541 / JCM 21823 / NBRC 15573 / CFN 42).